The chain runs to 137 residues: UPF0768 protein C1952.04c (137 aa).

A compositionally biased stretch (basic and acidic residues) spans 79–93; the sequence is QRRRREDLPTPERPE. Residues 79-137 form a disordered region; that stretch reads QRRRREDLPTPERPEASAQQHAFFPGSSSQQTDIPNVRPQPHIPPPRKSDEAPPPYSYK. Positions 119–137 are enriched in pro residues; it reads PHIPPPRKSDEAPPPYSYK.

The protein belongs to the UPF0768 family.

The chain is UPF0768 protein C1952.04c from Schizosaccharomyces pombe (strain 972 / ATCC 24843) (Fission yeast).